A 492-amino-acid polypeptide reads, in one-letter code: Bifunctional protein GlmU (492 aa).

Residues 1–241 form a pyrophosphorylase region; it reads MIPENTGPAA…RWQVEGANDR (241 aa). Residues 14-17, Lys-28, Gln-81, 86-87, 112-114, Gly-151, Glu-166, Asn-181, and Asn-239 contribute to the UDP-N-acetyl-alpha-D-glucosamine site; these read LAAG, GT, and YGD. Residue Asp-114 coordinates Mg(2+). Asn-239 is a Mg(2+) binding site. The interval 242–262 is linker; that stretch reads VQLAALGAELNRRTVEAWMRA. Residues 263–492 form an N-acetyltransferase region; the sequence is GVTVVDPSTT…STPASTEEGK (230 aa). Residues Arg-344 and Lys-362 each contribute to the UDP-N-acetyl-alpha-D-glucosamine site. His-374 (proton acceptor) is an active-site residue. Tyr-377 and Asn-388 together coordinate UDP-N-acetyl-alpha-D-glucosamine. Acetyl-CoA-binding positions include 397–398, Ser-416, and Ala-434; that span reads NY. The interval 460-492 is disordered; sequence WVPANRPGSRSAELAQAAINNSSSTPASTEEGK. Positions 477–492 are enriched in polar residues; sequence AINNSSSTPASTEEGK.

The protein in the N-terminal section; belongs to the N-acetylglucosamine-1-phosphate uridyltransferase family. In the C-terminal section; belongs to the transferase hexapeptide repeat family. In terms of assembly, homotrimer. Mg(2+) serves as cofactor.

The protein resides in the cytoplasm. The enzyme catalyses alpha-D-glucosamine 1-phosphate + acetyl-CoA = N-acetyl-alpha-D-glucosamine 1-phosphate + CoA + H(+). The catalysed reaction is N-acetyl-alpha-D-glucosamine 1-phosphate + UTP + H(+) = UDP-N-acetyl-alpha-D-glucosamine + diphosphate. Its pathway is nucleotide-sugar biosynthesis; UDP-N-acetyl-alpha-D-glucosamine biosynthesis; N-acetyl-alpha-D-glucosamine 1-phosphate from alpha-D-glucosamine 6-phosphate (route II): step 2/2. It participates in nucleotide-sugar biosynthesis; UDP-N-acetyl-alpha-D-glucosamine biosynthesis; UDP-N-acetyl-alpha-D-glucosamine from N-acetyl-alpha-D-glucosamine 1-phosphate: step 1/1. The protein operates within bacterial outer membrane biogenesis; LPS lipid A biosynthesis. Functionally, catalyzes the last two sequential reactions in the de novo biosynthetic pathway for UDP-N-acetylglucosamine (UDP-GlcNAc). The C-terminal domain catalyzes the transfer of acetyl group from acetyl coenzyme A to glucosamine-1-phosphate (GlcN-1-P) to produce N-acetylglucosamine-1-phosphate (GlcNAc-1-P), which is converted into UDP-GlcNAc by the transfer of uridine 5-monophosphate (from uridine 5-triphosphate), a reaction catalyzed by the N-terminal domain. This is Bifunctional protein GlmU from Pseudarthrobacter chlorophenolicus (strain ATCC 700700 / DSM 12829 / CIP 107037 / JCM 12360 / KCTC 9906 / NCIMB 13794 / A6) (Arthrobacter chlorophenolicus).